Reading from the N-terminus, the 505-residue chain is Histidine--tRNA ligase, mitochondrial (505 aa).

A mitochondrion-targeting transit peptide spans 1-31; it reads MPHLGPLRRRAWAALLGQLLRPPSTVCTRGC. Ser66 bears the Phosphoserine mark. L-histidine contacts are provided by residues 130–132, Arg157, Gln173, Asp177, Arg326, and 330–331; these read DLT and YY. Lys443 carries the post-translational modification N6-acetyllysine.

The protein belongs to the class-II aminoacyl-tRNA synthetase family. In terms of assembly, homodimer.

It localises to the mitochondrion. It catalyses the reaction tRNA(His) + L-histidine + ATP = L-histidyl-tRNA(His) + AMP + diphosphate + H(+). Functionally, mitochondrial aminoacyl-tRNA synthetase that catalyzes the ATP-dependent ligation of histidine to the 3'-end of its cognate tRNA, via the formation of an aminoacyl-adenylate intermediate (His-AMP). The polypeptide is Histidine--tRNA ligase, mitochondrial (Hars2) (Mus musculus (Mouse)).